The following is a 229-amino-acid chain: Matrix protein (229 aa).

Residues 1-10 (MSSLKKILGL) show a composition bias toward low complexity. The disordered stretch occupies residues 1-23 (MSSLKKILGLKGKGKKSKKLGIA). Positions 2–4 (SSL) match the dynamin binding motif. A PPXY motif motif is present at residues 24–27 (PPPY). The short motif at 37-40 (PSAP) is the PTAP/PSAP motif element.

Belongs to the vesiculoviruses matrix protein family. Homomultimer. Interacts with viral nucleocapsid; this interaction contributes to the virion assembly. Interacts with the viral envelope glycoprotein; this interaction contributes to the virion assembly. Interacts with host RAE1-NUP98 complex. Interacts with host NEDD4 and TSG101. Interacts with host dynamin. Interacts with host NDUFAF4; the interaction inhibits viral propagation and is independent of interferon activation. Interacts with host GTF2H5; the interaction may inhibit host transcription. Post-translationally, phosphorylated by host.

The protein localises to the virion. The protein resides in the host endomembrane system. It is found in the host nucleus membrane. It localises to the host nucleus. Its subcellular location is the host cytoplasm. In terms of biological role, forms a double layer around the helical nucleocapsid, the inner matrix layer binding to the N helix and the outer matrix layer binding to the envelope glycoprotein. Plays a major role in assembly and budding of virion, by recruiting cellular partners of the ESCRT complexes that play a key role in releasing the budding particle from the host membrane. Condensates the ribonucleocapsid core during virus assembly. Inhibits the host mRNA nuclear export thereby inducing the shut off of cellular transcription and preventing the interferon signaling and the establishment of antiviral state in infected cells. This shutoff presumably inhibits interferon signaling and thus establishment of antiviral state in virus infected cells. Induces cell-rounding, cytoskeleton disorganization and apoptosis in infected cell. Inhibits host transcription, possibly through interaction with host DNA repair factor IIH/TFIIH GTF2H5 subunit. The sequence is that of Matrix protein (M) from Vesicular stomatitis Indiana virus (strain 98COE North America) (VSIV).